Reading from the N-terminus, the 327-residue chain is Malate dehydrogenase (327 aa).

12–18 (GAAGQIG) provides a ligand contact to NAD(+). Residues Arg-93 and Arg-99 each coordinate substrate. Residues Asn-106, Gln-113, and 130–132 (VGN) contribute to the NAD(+) site. The substrate site is built by Asn-132 and Arg-163. His-188 functions as the Proton acceptor in the catalytic mechanism.

It belongs to the LDH/MDH superfamily. MDH type 2 family.

The catalysed reaction is (S)-malate + NAD(+) = oxaloacetate + NADH + H(+). Catalyzes the reversible oxidation of malate to oxaloacetate. This is Malate dehydrogenase from Cupriavidus pinatubonensis (strain JMP 134 / LMG 1197) (Cupriavidus necator (strain JMP 134)).